Here is a 170-residue protein sequence, read N- to C-terminus: Lipoprotein signal peptidase (170 aa).

The next 3 helical transmembrane spans lie at 9–29 (FNIF…KYLV), 72–92 (IFFL…SLKE), and 96–118 (IARI…RLFR). Active-site residues include Asp124 and Asp146. A helical membrane pass occupies residues 143-163 (NFADSYVVIGMILFLVYDFFI).

This sequence belongs to the peptidase A8 family.

The protein resides in the cell inner membrane. It catalyses the reaction Release of signal peptides from bacterial membrane prolipoproteins. Hydrolyzes -Xaa-Yaa-Zaa-|-(S,diacylglyceryl)Cys-, in which Xaa is hydrophobic (preferably Leu), and Yaa (Ala or Ser) and Zaa (Gly or Ala) have small, neutral side chains.. It participates in protein modification; lipoprotein biosynthesis (signal peptide cleavage). In terms of biological role, this protein specifically catalyzes the removal of signal peptides from prolipoproteins. This Borreliella afzelii (strain PKo) (Borrelia afzelii) protein is Lipoprotein signal peptidase.